A 204-amino-acid chain; its full sequence is Urease accessory protein UreG (204 aa).

Residue 11–18 (GPVGAGKT) coordinates GTP.

The protein belongs to the SIMIBI class G3E GTPase family. UreG subfamily. As to quaternary structure, homodimer. UreD, UreF and UreG form a complex that acts as a GTP-hydrolysis-dependent molecular chaperone, activating the urease apoprotein by helping to assemble the nickel containing metallocenter of UreC. The UreE protein probably delivers the nickel.

The protein localises to the cytoplasm. Facilitates the functional incorporation of the urease nickel metallocenter. This process requires GTP hydrolysis, probably effectuated by UreG. The chain is Urease accessory protein UreG from Staphylococcus saprophyticus subsp. saprophyticus (strain ATCC 15305 / DSM 20229 / NCIMB 8711 / NCTC 7292 / S-41).